The chain runs to 465 residues: MESLRIYNTLARDKQVFVPRQSGEVRMYVCGITVYDYCHVGHARMLVVFDLVQRWLRAIGYRVTYVRNITDIDDKIIRRALENGETIKSLTDRFIGAMHEDEAALGIQRPDIEPRATQFIPQMLGMIEKLETNGYAYQAADGDVNYSVRKFANYGKLSGKSLDDLRAGERVAANDAKEDPLDFVLWKRAKADDPQGASWASKYGMGRPGWHIECSAMGCTLLGEHFDIHGGGQDLQFPHHENEIAQSEGATGQTFVNYWMHNGFVQVDNEKMSKSLGNFFTIREVLERYDAEVMRFFIVRTHYRSPLNYSDVHLDDARASLTRLYTALKDVQPDALALDWNEPHAQRFAAAMNDDINTPVAVATLFELAGEVNRTCDASLARQLKQLAGLLGLLGREPRAFLQQATGAAQAGGLAADEIEAKIAARVAAKQAKDYAEADRIRAELLDAGIALEDKPGGSTEWRRV.

Cysteine 30 is a binding site for Zn(2+). Positions 32–42 (ITVYDYCHVGH) match the 'HIGH' region motif. Zn(2+)-binding residues include cysteine 214, histidine 239, and glutamate 243. The 'KMSKS' region signature appears at 271 to 275 (KMSKS). Lysine 274 serves as a coordination point for ATP.

It belongs to the class-I aminoacyl-tRNA synthetase family. Monomer. The cofactor is Zn(2+).

The protein localises to the cytoplasm. The enzyme catalyses tRNA(Cys) + L-cysteine + ATP = L-cysteinyl-tRNA(Cys) + AMP + diphosphate. The chain is Cysteine--tRNA ligase from Burkholderia ambifaria (strain MC40-6).